The sequence spans 375 residues: Delta(9) fatty acid conjugase-like enzyme (375 aa).

2 consecutive transmembrane segments (helical) span residues 38-58 and 66-86; these read LSLS…LFYV and LPYS…GAFL. The Histidine box-1 signature appears at 94–98; that stretch reads HECGH. A Histidine box-2 motif is present at residues 130 to 134; the sequence is HRNHH. 3 consecutive transmembrane segments (helical) span residues 168-188, 219-239, and 241-261; these read FGLV…YLIF, VFFS…IAIA, and GAML…AFIF. A Histidine box-3 motif is present at residues 307–311; the sequence is HVVHH.

This sequence belongs to the fatty acid desaturase type 1 family.

The protein resides in the membrane. Its function is as follows. Involved in the biosynthesis of dimorphecolic acid (9-OH-18:2(10E,12E)). Catalyzes the formation of the C-9 hydroxyl group and the (E)-delta(10) double bond from the trans-linoleic acid (16:2(9Z,12E)) produced by FAD2-1. Very limited activity with cis-linoleic acid (16:2(9Z,12Z)). This is Delta(9) fatty acid conjugase-like enzyme from Dimorphotheca sinuata (African daisy).